Here is a 387-residue protein sequence, read N- to C-terminus: Acetylornithine deacetylase (387 aa).

Zn(2+) is bound at residue His-80. Asp-82 is an active-site residue. Asp-112 contributes to the Zn(2+) binding site. Glu-144 is an active-site residue. Zn(2+) contacts are provided by Glu-145, Glu-169, and His-355.

It belongs to the peptidase M20A family. ArgE subfamily. As to quaternary structure, homodimer. Zn(2+) is required as a cofactor. It depends on Co(2+) as a cofactor. Glutathione serves as cofactor.

It localises to the cytoplasm. The enzyme catalyses N(2)-acetyl-L-ornithine + H2O = L-ornithine + acetate. It functions in the pathway amino-acid biosynthesis; L-arginine biosynthesis; L-ornithine from N(2)-acetyl-L-ornithine (linear): step 1/1. Catalyzes the hydrolysis of the amide bond of N(2)-acetylated L-amino acids. Cleaves the acetyl group from N-acetyl-L-ornithine to form L-ornithine, an intermediate in L-arginine biosynthesis pathway, and a branchpoint in the synthesis of polyamines. The sequence is that of Acetylornithine deacetylase from Proteus mirabilis (strain HI4320).